The chain runs to 744 residues: Biotin sulfoxide reductase (744 aa).

Ser-121 is a binding site for Mo-bis(molybdopterin guanine dinucleotide).

The protein belongs to the prokaryotic molybdopterin-containing oxidoreductase family. It depends on Mo-bis(molybdopterin guanine dinucleotide) as a cofactor.

In terms of biological role, this enzyme may serve as a scavenger, allowing the cell to utilize biotin sulfoxide as a biotin source. It reduces a spontaneous oxidation product of biotin, D-biotin D-sulfoxide (BSO or BDS), back to biotin. The polypeptide is Biotin sulfoxide reductase (Cereibacter sphaeroides (Rhodobacter sphaeroides)).